A 175-amino-acid chain; its full sequence is Sec-independent protein translocase protein TatB (175 aa).

Residues 1-21 (MLDLGLSKMALIGVVALVVLG) traverse the membrane as a helical segment. 2 disordered regions span residues 96–115 (VSPG…AASG) and 153–175 (VQSG…ARFL). The segment covering 160 to 175 (VARHRPASLRRPARFL) has biased composition (basic residues).

Belongs to the TatB family. The Tat system comprises two distinct complexes: a TatABC complex, containing multiple copies of TatA, TatB and TatC subunits, and a separate TatA complex, containing only TatA subunits. Substrates initially bind to the TatABC complex, which probably triggers association of the separate TatA complex to form the active translocon.

The protein localises to the cell inner membrane. Its function is as follows. Part of the twin-arginine translocation (Tat) system that transports large folded proteins containing a characteristic twin-arginine motif in their signal peptide across membranes. Together with TatC, TatB is part of a receptor directly interacting with Tat signal peptides. TatB may form an oligomeric binding site that transiently accommodates folded Tat precursor proteins before their translocation. This is Sec-independent protein translocase protein TatB from Burkholderia mallei (strain ATCC 23344).